Reading from the N-terminus, the 230-residue chain is Large ribosomal subunit protein uL1 (230 aa).

This sequence belongs to the universal ribosomal protein uL1 family. As to quaternary structure, part of the 50S ribosomal subunit.

Functionally, binds directly to 23S rRNA. The L1 stalk is quite mobile in the ribosome, and is involved in E site tRNA release. Protein L1 is also a translational repressor protein, it controls the translation of the L11 operon by binding to its mRNA. In Limosilactobacillus reuteri subsp. reuteri (strain JCM 1112) (Lactobacillus reuteri), this protein is Large ribosomal subunit protein uL1.